The sequence spans 920 residues: Probable transport protein MmpL7 (920 aa).

The next 12 helical transmembrane spans lie at 44–64 (LLVVAAWVAAAVIANLLLTFT), 210–230 (ITAWQSATIVTVAAVIAVLLL), 241–261 (AIVLLTADLSLAVAWPLAAVV), 271–291 (VFSWTLAAVLTIGTITAATML), 311–331 (LPAFALPGACVAIFTGPLLLA), 344–364 (LGVFVALAASLTVLPALIALA), 389–409 (SASALGTAAVLAICMLPIIGM), 761–781 (LIHDAVLLAVILLTVVALASM), 790–810 (AVGVGVLASYLAALGVSIALW), 822–842 (VPLVSFAVLASCGVPYLVAGI), 864–884 (GAVAPLAALGGVFGAGLVLVS), and 888–908 (FSVLSQIGTVVVLGLGVLITV).

The protein belongs to the resistance-nodulation-cell division (RND) (TC 2.A.6) family. MmpL subfamily.

The protein localises to the cell membrane. This is Probable transport protein MmpL7 (mmpL7) from Mycobacterium bovis (strain ATCC BAA-935 / AF2122/97).